Reading from the N-terminus, the 559-residue chain is Potassium-transporting ATPase potassium-binding subunit (559 aa).

12 helical membrane-spanning segments follow: residues 7 to 27, 63 to 83, 132 to 152, 170 to 190, 253 to 273, 283 to 303, 327 to 347, 356 to 376, 379 to 399, 416 to 436, 484 to 504, and 524 to 544; these read LLIA…GSGL, LLAL…LLFW, GLTV…FALI, LVRI…LFFI, MVQM…FGEA, LLWA…WAEV, FGVL…CGAV, ALGG…FGGV, GLYG…LMIG, MTAL…ALAM, LLAF…MAIA, and GALF…LTFI.

The protein belongs to the KdpA family. In terms of assembly, the system is composed of three essential subunits: KdpA, KdpB and KdpC.

The protein localises to the cell inner membrane. Its function is as follows. Part of the high-affinity ATP-driven potassium transport (or Kdp) system, which catalyzes the hydrolysis of ATP coupled with the electrogenic transport of potassium into the cytoplasm. This subunit binds the periplasmic potassium ions and delivers the ions to the membrane domain of KdpB through an intramembrane tunnel. The sequence is that of Potassium-transporting ATPase potassium-binding subunit from Salmonella arizonae (strain ATCC BAA-731 / CDC346-86 / RSK2980).